We begin with the raw amino-acid sequence, 628 residues long: MGLCHSNCPFVEQKCHRIKVSRPTEGGVWPTTNGFSLDHTTKSAKTLGRTRTTSPKTNERGMNLGSSGGTSTSGHTSSGYSSGNAPGTSSSSTGGGATSSEMPAEIRPKVVTVKHPESNKPKPTTKKGKAIQADVDVIKEFQRCKEENILRLDLSKSSITVIPPSVKDCTSLIEFYLYGNKISSLPVEIGCLSNLKTLALNENSLTSLPDSLQNLKALKVLDLRHNKLSEIPDVIYKLHTLTTLYLRFNRIKVVGDNLKNLSSLTMLSLRENKIHELPAAIGHLRNLTTLDLSHNHLKHLPEAIGNCVNLTALDLQHNDLLDIPETIGNLANLQRLGLRYNQLTAIPVSLRNCIHMDEFNVEGNSISQLPDGLLASLSNLTTITLSRNAFHSYPSGGPAQFTNVTSINMEHNQIDKIQYGIFSRAKGLTKLNMKENALTSLPLDIGTWSQMVELNFGTNSLAKLPDDIHCLQNLEILILSNNMLKRIPNTIGNLKKLRVLDLEENRLESLPSEIGLLHDLQKLILQSNALQSLPRTIGHLTNLTYLSVGENNLQYLPEEIGTLENLESLYINDNASLVKLPYELALCQNLAIMSIENCPLSALPPEVVGGGPSLVIQYLKLHSPYRQM.

Positions 23–130 (PTEGGVWPTT…PKPTTKKGKA (108 aa)) are disordered. Over residues 69–92 (GTSTSGHTSSGYSSGNAPGTSSSS) the composition is skewed to low complexity. Positions 104-120 (AEIRPKVVTVKHPESNK) are enriched in basic and acidic residues. 20 LRR repeats span residues 148 to 169 (NILR…VKDC), 171 to 192 (SLIE…IGCL), 194 to 216 (NLKT…QNLK), 217 to 238 (ALKV…IYKL), 240 to 262 (TLTT…KNLS), 263 to 284 (SLTM…IGHL), 286 to 307 (NLTT…IGNC), 309 to 330 (NLTA…IGNL), 332 to 353 (NLQR…LRNC), 355 to 376 (HMDE…LLAS), 379 to 400 (NLTT…GPAQ), 403 to 424 (NVTS…IFSR), 427 to 448 (GLTK…IGTW), 450 to 471 (QMVE…IHCL), 473 to 494 (NLEI…IGNL), 496 to 517 (KLRV…IGLL), 519 to 540 (DLQK…IGHL), 542 to 563 (NLTY…IGTL), 565 to 587 (NLES…LALC), and 589 to 610 (NLAI…VVGG).

Belongs to the SHOC2 family.

Functionally, acts as a Ras effector and participates in MAPK pathway activation. Probably acts as a regulatory subunit of protein phosphatase that specifically dephosphorylates Raf kinase and stimulate Raf activity at specialized signaling complexes upon Ras activation. The protein is Leucine-rich repeat protein soc-2 homolog (Sur-8) of Culex quinquefasciatus (Southern house mosquito).